Reading from the N-terminus, the 273-residue chain is Ribosomal RNA small subunit methyltransferase A (273 aa).

S-adenosyl-L-methionine is bound by residues N18, L20, G45, E66, D91, and N113.

The protein belongs to the class I-like SAM-binding methyltransferase superfamily. rRNA adenine N(6)-methyltransferase family. RsmA subfamily.

It is found in the cytoplasm. It catalyses the reaction adenosine(1518)/adenosine(1519) in 16S rRNA + 4 S-adenosyl-L-methionine = N(6)-dimethyladenosine(1518)/N(6)-dimethyladenosine(1519) in 16S rRNA + 4 S-adenosyl-L-homocysteine + 4 H(+). Specifically dimethylates two adjacent adenosines (A1518 and A1519) in the loop of a conserved hairpin near the 3'-end of 16S rRNA in the 30S particle. May play a critical role in biogenesis of 30S subunits. The protein is Ribosomal RNA small subunit methyltransferase A of Escherichia coli O139:H28 (strain E24377A / ETEC).